The sequence spans 102 residues: Small ribosomal subunit protein uS10 (102 aa).

It belongs to the universal ribosomal protein uS10 family. As to quaternary structure, part of the 30S ribosomal subunit.

Functionally, involved in the binding of tRNA to the ribosomes. This Levilactobacillus brevis (strain ATCC 367 / BCRC 12310 / CIP 105137 / JCM 1170 / LMG 11437 / NCIMB 947 / NCTC 947) (Lactobacillus brevis) protein is Small ribosomal subunit protein uS10.